The following is a 246-amino-acid chain: tRNA (guanine-N(1)-)-methyltransferase (246 aa).

Residues G112 and 131 to 136 (IGDYVL) contribute to the S-adenosyl-L-methionine site.

This sequence belongs to the RNA methyltransferase TrmD family. As to quaternary structure, homodimer.

It is found in the cytoplasm. The enzyme catalyses guanosine(37) in tRNA + S-adenosyl-L-methionine = N(1)-methylguanosine(37) in tRNA + S-adenosyl-L-homocysteine + H(+). Its function is as follows. Specifically methylates guanosine-37 in various tRNAs. The sequence is that of tRNA (guanine-N(1)-)-methyltransferase from Thermosipho africanus (strain TCF52B).